The primary structure comprises 411 residues: Multidrug resistance protein MdtA (411 aa).

Residues 1 to 19 (MNAKRIRGLLILAAVIAIA) form the signal peptide. Polar residues predominate over residues 31 to 49 (PAAPGTSEQHAARTSHSEN). Residues 31–58 (PAAPGTSEQHAARTSHSENSGSGGGRRA) form a disordered region.

The protein belongs to the membrane fusion protein (MFP) (TC 8.A.1) family. As to quaternary structure, part of a tripartite efflux system composed of MdtA, MdtB and MdtC.

The protein resides in the cell inner membrane. The protein is Multidrug resistance protein MdtA of Pectobacterium atrosepticum (strain SCRI 1043 / ATCC BAA-672) (Erwinia carotovora subsp. atroseptica).